Consider the following 573-residue polypeptide: Flagellin B (573 aa).

This sequence belongs to the bacterial flagellin family. Heteromer of FlaA and FlaB. A flagellar filament composed exclusively of FlaA is indistinguishable in length from that of the wild-type and shows a slight reduction in motility. The flagellar filament composed exclusively of the FlaB is severely truncated in length and greatly reduced in motility. Thus, while both flagellins are not necessary for motility, both are required for a fully active flagellar filament.

Its subcellular location is the secreted. The protein resides in the bacterial flagellum. In terms of biological role, flagellin is the subunit protein which polymerizes to form the filaments of bacterial flagella. The chain is Flagellin B (flaB) from Campylobacter coli.